The chain runs to 602 residues: UvrABC system protein C (602 aa).

In terms of domain architecture, GIY-YIG spans 15–92 (DLPGSYQMKD…IQKYQPYYNI (78 aa)). The 36-residue stretch at 197–232 (GKAKASLTAKMERAAKNLQFERAAEIRDQLHYIEQT) folds into the UVR domain.

The protein belongs to the UvrC family. Interacts with UvrB in an incision complex.

It localises to the cytoplasm. Functionally, the UvrABC repair system catalyzes the recognition and processing of DNA lesions. UvrC both incises the 5' and 3' sides of the lesion. The N-terminal half is responsible for the 3' incision and the C-terminal half is responsible for the 5' incision. The chain is UvrABC system protein C from Lacticaseibacillus paracasei (strain ATCC 334 / BCRC 17002 / CCUG 31169 / CIP 107868 / KCTC 3260 / NRRL B-441) (Lactobacillus paracasei).